Here is a 230-residue protein sequence, read N- to C-terminus: Sugar fermentation stimulation protein homolog (230 aa).

This sequence belongs to the SfsA family.

This Ruegeria pomeroyi (strain ATCC 700808 / DSM 15171 / DSS-3) (Silicibacter pomeroyi) protein is Sugar fermentation stimulation protein homolog.